The sequence spans 300 residues: Porphobilinogen deaminase (300 aa).

Cysteine 239 carries the post-translational modification S-(dipyrrolylmethanemethyl)cysteine.

The protein belongs to the HMBS family. As to quaternary structure, monomer. It depends on dipyrromethane as a cofactor.

The enzyme catalyses 4 porphobilinogen + H2O = hydroxymethylbilane + 4 NH4(+). Its pathway is porphyrin-containing compound metabolism; protoporphyrin-IX biosynthesis; coproporphyrinogen-III from 5-aminolevulinate: step 2/4. In terms of biological role, tetrapolymerization of the monopyrrole PBG into the hydroxymethylbilane pre-uroporphyrinogen in several discrete steps. The sequence is that of Porphobilinogen deaminase from Francisella tularensis subsp. holarctica (strain FTNF002-00 / FTA).